The primary structure comprises 243 residues: Probable transcriptional regulatory protein LGAS_1276 (243 aa).

Residues M1–G22 are disordered.

It belongs to the TACO1 family.

It localises to the cytoplasm. The sequence is that of Probable transcriptional regulatory protein LGAS_1276 from Lactobacillus gasseri (strain ATCC 33323 / DSM 20243 / BCRC 14619 / CIP 102991 / JCM 1131 / KCTC 3163 / NCIMB 11718 / NCTC 13722 / AM63).